We begin with the raw amino-acid sequence, 124 residues long: Fluoride-specific ion channel FluC (124 aa).

4 consecutive transmembrane segments (helical) span residues 1–21 (MVPL…LRFA), 38–58 (TLAV…LFLI), 69–89 (GLMV…LDTV), and 99–119 (LALG…WAGL). Residues Gly76 and Thr79 each contribute to the Na(+) site.

It belongs to the fluoride channel Fluc/FEX (TC 1.A.43) family.

The protein resides in the cell inner membrane. The enzyme catalyses fluoride(in) = fluoride(out). Its activity is regulated as follows. Na(+) is not transported, but it plays an essential structural role and its presence is essential for fluoride channel function. Fluoride-specific ion channel. Important for reducing fluoride concentration in the cell, thus reducing its toxicity. This chain is Fluoride-specific ion channel FluC, found in Pseudomonas fluorescens (strain Pf0-1).